The sequence spans 810 residues: MANFINMYRQLLSLPLSALVKNNPIPANPIEELSLNIHQPIVYVLPYTSQTDFVIFRRNCLALGLPDPAEKNEINGVKLPRYVYLDEGRRIFKSKGAKDETTTIFNKYLELHRTSESLDVQLIPVSVLWGRSPGQEDKSDLPNLRLLNGIQKTFAAIWFGRDTFVRFSQAVSLRYMVVEHGSDEKIAQKLARVAKMHFAKQRISATGPRLPNRQAMFNKLLQSEAIRRAIEDEAKSKNISIEKAQKEAYKILDEIAADVSHSSLRAVDRFLRWLWNKLYSGIDVQNSNRVRKLALEGHEIVYVPCHRSHIDYLLLSYVLYHQGLVPPHIAAGINLNFWPIGRMFRSWGAFFIRRTFKGNRLYSAIFREYLSELFHRGYSVEYFIEGGRSRTGRLLAPKTGMMSMTLQALQHSQTRPISIVPVYVGYEHVLEVDTYAKELRGAAKEKENAGLVLRVIKKLRNLGQGFVNFGEPITLSNYLSQHFPDWKEQNHEEKPQWFTPAVNNISKQVMININKAAAVNSMNLVGTALLSSRQRALSREQLLEQLSSYQQLLQNVPYSTDVVLPNVTPQAMLEHVLALDRIGVLIEKDNFGEIVRLERSSAVLMTYYRNNIQHLFVLPSLVASIILHYEAIQKDLLLDAIRKIYPFLQGELFLHFNEDELNVQIHQIINEFARQSVINSNDNFLSINKSKVRILQLWSAGTREILQRYYITVTILQKQPAISRAELEKESQLVAQRLSVLHGINAPEFFDKAVFSSFIANLKEQRYFDESSYTVLDKIEELASTLSHLISTEICLTVKGTIEKSEDLSS.

Residues Cys305–Ile310 carry the HXXXXD motif motif.

Belongs to the GPAT/DAPAT family.

It is found in the cell inner membrane. The catalysed reaction is sn-glycerol 3-phosphate + an acyl-CoA = a 1-acyl-sn-glycero-3-phosphate + CoA. It participates in phospholipid metabolism; CDP-diacylglycerol biosynthesis; CDP-diacylglycerol from sn-glycerol 3-phosphate: step 1/3. This Haemophilus influenzae (strain PittEE) protein is Glycerol-3-phosphate acyltransferase.